A 556-amino-acid polypeptide reads, in one-letter code: Neurofilament light polypeptide (556 aa).

The residue at position 2 (Ser2) is an N-acetylserine. Residues 2-94 (SSYGYDPFFP…KSIRSQERAQ (93 aa)) form a head region. Residues 91–402 (ERAQLQDLND…KLLEGEETRL (312 aa)) form the IF rod domain. A coil 1A region spans residues 95–126 (LQDLNDRFACFIERVHELEQQNKVLEAELLVL). The interval 127-139 (RQKHAEPSRFRAL) is linker 1. Residues 140 to 235 (YEQEIRELRL…KVHEEELAEL (96 aa)) are coil 1B. The segment at 236 to 254 (QAQIQYAHLSVEMDVSAKP) is linker 12. The interval 255–273 (DLSAALRDIRAQYEKLAAR) is coil 2A. The segment at 274 to 282 (NMQNAEEWF) is linker 2. Residues 283–398 (RSRFTVLSES…AAYRKLLEGE (116 aa)) are coil 2B. Positions 399 to 445 (ETRLSFTSVGSITSGYTQTAPTFGRSAYSGLQSTSYLMTTRSFPTYY) are tail, subdomain A. The segment at 399–556 (ETRLSFTSVG…KEETEVKKKA (158 aa)) is tail. The segment at 446–556 (SSHVQEEQIE…KEETEVKKKA (111 aa)) is tail, subdomain B (acidic). Positions 464-473 (KAGEAKAAPA) are enriched in low complexity. The segment at 464–556 (KAGEAKAAPA…KEETEVKKKA (93 aa)) is disordered. Over residues 474 to 540 (EEGEEEEKEE…AEETGEEEKE (67 aa)) the composition is skewed to acidic residues. A compositionally biased stretch (basic and acidic residues) spans 541–556 (EKEAAGKEETEVKKKA).

It belongs to the intermediate filament family. As to quaternary structure, forms homodimers (in vitro).

Its subcellular location is the cell projection. It localises to the axon. The protein resides in the cytoplasm. The protein localises to the cytoskeleton. Neurofilaments usually contain three intermediate filament proteins: NEFL, NEFM, and NEFH which are involved in the maintenance of neuronal caliber. May additionally cooperate with the neuronal intermediate filament proteins to form neuronal filamentous networks. The sequence is that of Neurofilament light polypeptide (NEFL) from Coturnix japonica (Japanese quail).